A 399-amino-acid chain; its full sequence is Elongation factor Tu (399 aa).

The region spanning 10 to 204 (KPHVNIGTIG…AVDASIPEPE (195 aa)) is the tr-type G domain. The interval 19–26 (GHVDHGKT) is G1. 19 to 26 (GHVDHGKT) contributes to the GTP binding site. Thr26 provides a ligand contact to Mg(2+). A G2 region spans residues 60–64 (GITIN). Positions 81 to 84 (DCPG) are G3. Residues 81–85 (DCPGH) and 136–139 (NKCD) contribute to the GTP site. The tract at residues 136–139 (NKCD) is G4. The G5 stretch occupies residues 174-176 (SGL).

This sequence belongs to the TRAFAC class translation factor GTPase superfamily. Classic translation factor GTPase family. EF-Tu/EF-1A subfamily. Monomer.

Its subcellular location is the cytoplasm. The catalysed reaction is GTP + H2O = GDP + phosphate + H(+). In terms of biological role, GTP hydrolase that promotes the GTP-dependent binding of aminoacyl-tRNA to the A-site of ribosomes during protein biosynthesis. This Synechococcus sp. (strain CC9311) protein is Elongation factor Tu.